We begin with the raw amino-acid sequence, 133 residues long: Profilin-2 (133 aa).

Residues C13 and C117 are joined by a disulfide bond. The Involved in PIP2 interaction motif lies at 83–99; sequence AVIRGKKGSGGITIKKT. At T113 the chain carries Phosphothreonine.

Belongs to the profilin family. Occurs in many kinds of cells as a complex with monomeric actin in a 1:1 ratio. In terms of processing, phosphorylated by MAP kinases.

The protein resides in the cytoplasm. The protein localises to the cytoskeleton. Functionally, binds to actin and affects the structure of the cytoskeleton. At high concentrations, profilin prevents the polymerization of actin, whereas it enhances it at low concentrations. This is Profilin-2 from Corylus avellana (European hazel).